Reading from the N-terminus, the 150-residue chain is C-type lectin mosGCTL-7 (150 aa).

The N-terminal stretch at 1–17 (MQLVHVLVVLLSVVAHA) is a signal peptide. Positions 18 to 140 (KKFFIPNLKA…CRGFKAYIVC (123 aa)) constitute a C-type lectin domain. The N-linked (GlcNAc...) asparagine glycan is linked to asparagine 67. A disulfide bond links cysteine 111 and cysteine 131.

In terms of assembly, interacts with putative receptor-type tyrosine-protein phosphatase mosPTP-1; the interaction probably mediates the recruitment of Japanese encephalitis virus particles in complex with C-type lectin mosGCTL-7 to the cell surface. As to quaternary structure, (Microbial infection) Interacts with envelope protein E (glycosylated) of Japanese encephalitis virus in a calcium-dependent manner.

It is found in the secreted. Carbohydrate-binding protein. Functionally, (Microbial infection) Facilitates Japanese encephalitis virus infection in mosquitoes probably via capturing viral particles and presenting them to a ligand on the cell surface, thereby facilitating viral entry. The protein is C-type lectin mosGCTL-7 of Aedes aegypti (Yellowfever mosquito).